Here is a 321-residue protein sequence, read N- to C-terminus: Probable arabinan endo-1,5-alpha-L-arabinosidase A (321 aa).

Positions 1-19 are cleaved as a signal peptide; it reads MHPSTFVTTIACLAGLAHG. Catalysis depends on aspartate 34, which acts as the Proton acceptor. The Proton donor role is filled by glutamate 200.

Belongs to the glycosyl hydrolase 43 family.

The protein resides in the secreted. It carries out the reaction Endohydrolysis of (1-&gt;5)-alpha-arabinofuranosidic linkages in (1-&gt;5)-arabinans.. The protein operates within glycan metabolism; L-arabinan degradation. In terms of biological role, endo-1,5-alpha-L-arabinanase involved in degradation of pectin. Its preferred substrate is linear 1,5-alpha-L-arabinan. This chain is Probable arabinan endo-1,5-alpha-L-arabinosidase A (abnA), found in Aspergillus clavatus (strain ATCC 1007 / CBS 513.65 / DSM 816 / NCTC 3887 / NRRL 1 / QM 1276 / 107).